Consider the following 283-residue polypeptide: MDKALISHQEGDQLYDELCHAFFVRSNNGKLHLAPVERPKCVLDLGCGAGVWATEFGERLSDREILWTWALKTGNCSQGVSFMSGPDVPNCQFIAADIQNEWTWLAQHKVDFIHIRGLVGFIHSWPDLLRRVHASLAPGGWLEIADLGPHTLSDDGSLSQAQGLLQFDKLSDKMLGTMGQQVGLVTRLGDMMETAGFQDVSESTRKTPLSDWSDDVEMRQMASTSAALHEMDFRMIASRGLQPVLNLSSEKVEHVLSDALHDMHNKRIHAYKLRYTFTGCKRD.

The protein belongs to the methyltransferase superfamily. LaeA methyltransferase family.

It catalyses the reaction campesine A + S-adenosyl-L-methionine = campesine B + S-adenosyl-L-homocysteine + H(+). The protein operates within alkaloid biosynthesis. Functionally, methyltransferase; part of the gene cluster that mediates the biosynthesis of campesine G, a dimeric indole piperazine alkaloid that shows good insecticidal activity Galleria mellonella. Within the pathway, cpsF methylates campesine A at N13 of piperazine ring to produce campesine B. The non-canonical non-ribosomal peptide synthetase cpsA catalyzes the first steps of the pathway by producing L-tryptophanal and L-valinal from their respective amino-acids. These products condensate spontaneously to form trypyl-valyl pyrazine also known as didehydrocampesine A. The NmrA-like family domain-containing oxidoreductase cpsB is the next enzyme in cps pathway and reduces the unstable didehydrocampesine A to campesine A. The methyltransferase cpsF and the acetyltransferase cpsE both recognize N13 of piperazine ring to carry out methylation and acetylation of campesine A to produce campesine C and B, respectively. The cytochrome P450 monooxygenase cpsD then acts as a dimerase that catalyzes oxidative heterocoupling between campesine B and C to produce heterodimers with unexpected 6/5/6/6/6/6/5/6 eight-ring scaffold called campesine D. Finally,the cytochrome P450 monooxygenase cpsC is a regioselective dehydrogenase that catalyzes dehydrogenation reaction towards C2-N1 to produce campesine G. This chain is Methyltransferase cpsF, found in Aspergillus campestris (strain IBT 28561).